The primary structure comprises 301 residues: MNWITNYVRPRINSMLGRREVPENLWIKCPETGEMVFHKDLEGNKWVIPASGYHMKMPAKARLADLFDNGEFESLPQPKVAQDPLKFRDSKKYSDRLRDSRLKTEQEDTILAGVGKVQGLKLVAVVHEFNFIGGSLGMAAGEAIVKAFERATAEKCPLVMFPASGGARMQEGILSLMQLPRTTVAVDMLKESGQPYIVVLTNPTTGGVTASYAMLGDIHLAEPGAEIGFAGKRVIEQTLREKLPEGFQTSEYLLEHGMVDMVVKRHDIPETLARLLKILTKKPVSAANDMNSGAIALAASA.

Residues 25–294 (LWIKCPETGE…SAANDMNSGA (270 aa)) enclose the CoA carboxyltransferase N-terminal domain.

This sequence belongs to the AccD/PCCB family. Acetyl-CoA carboxylase is a heterohexamer composed of biotin carboxyl carrier protein (AccB), biotin carboxylase (AccC) and two subunits each of ACCase subunit alpha (AccA) and ACCase subunit beta (AccD).

The protein resides in the cytoplasm. The enzyme catalyses N(6)-carboxybiotinyl-L-lysyl-[protein] + acetyl-CoA = N(6)-biotinyl-L-lysyl-[protein] + malonyl-CoA. Its pathway is lipid metabolism; malonyl-CoA biosynthesis; malonyl-CoA from acetyl-CoA: step 1/1. Its function is as follows. Component of the acetyl coenzyme A carboxylase (ACC) complex. Biotin carboxylase (BC) catalyzes the carboxylation of biotin on its carrier protein (BCCP) and then the CO(2) group is transferred by the transcarboxylase to acetyl-CoA to form malonyl-CoA. The chain is Acetyl-coenzyme A carboxylase carboxyl transferase subunit beta from Rhizobium leguminosarum bv. trifolii (strain WSM1325).